We begin with the raw amino-acid sequence, 259 residues long: Putative pyrophosphorylase ModD (259 aa).

This sequence belongs to the NadC/ModD family.

In Rhodobacter capsulatus (Rhodopseudomonas capsulata), this protein is Putative pyrophosphorylase ModD (modD).